The primary structure comprises 91 residues: Early E3B 10.4 kDa protein (91 aa).

A signal peptide spans 1–22 (MIPRVLILLTLVALFCACSTLA). The Lumenal portion of the chain corresponds to 23-34 (AVAHIEVDCIPP). The chain crosses the membrane as a helical span at residues 35–60 (FTVYLLYGFVTLILICSLVTVVIAFI). Residues 61-91 (QFIDWICVRIAYLRHHPQYRDRTIADLLRIL) are Cytoplasmic-facing.

It belongs to the adenoviridae E3B family.

It is found in the host endoplasmic reticulum membrane. Down-regulates the EGF receptor. This Homo sapiens (Human) protein is Early E3B 10.4 kDa protein.